A 591-amino-acid chain; its full sequence is MAERTHACGKVTVEAVGQTVQLKGWVQKRRDLGGLIFIDLRDRTGIVQVVFNPETSKEALEVAETIRSEYVLHVEGTVVERGEGAINDNMATGRIEVQATKVNVLNAAKTTPIIIADDTDASEDVRLKYRYLDLRRPVMFNTFKMRHDVTKTIRNFLDTEEFLEVETPILTKSTPEGARDYLVPSRVHDGEFYALPQSPQLFKQLLMVGGFERYYQVARCFRDEDLRADRQPEFTQIDIEASFLTQDEILDMMERMMTKVMKDAKGVEVSAPFPRMKYADAMARYGSDKPDTRFEMELTDLSEFAAGCGFKVFTSAVESGGQVKAINAKGAASKYSRKDIDALTEFVKVYGAKGLAWLKVEEDGLKGPIAKFFGEEDANVLMTTLEATAGDLLLFVADKKSVVADSLGALRLRLGKELELIDESKFNFLWVTDWPLLEYDEDADRYFAAHHPFTMPFREDVELLETAPEKARAQAYDLVLNGYELGGGSLRIYERDVQEKMFKALGFSQEEAQEQFGFLLEAFEYGTPPHGGIALGLDRLVMLLAGRTNLRDTIAFPKTASASCLLTEAPSPVAEAQLEELNLKLSLKEEK.

Glu-176 serves as a coordination point for L-aspartate. The tract at residues 200–203 is aspartate; that stretch reads QLFK. Arg-222 contacts L-aspartate. Residues 222-224 and Gln-231 each bind ATP; that span reads RDE. An L-aspartate-binding site is contributed by His-450. Glu-484 provides a ligand contact to ATP. Arg-491 contacts L-aspartate. 536-539 contributes to the ATP binding site; the sequence is GLDR.

It belongs to the class-II aminoacyl-tRNA synthetase family. Type 1 subfamily. Homodimer.

The protein localises to the cytoplasm. The enzyme catalyses tRNA(Asx) + L-aspartate + ATP = L-aspartyl-tRNA(Asx) + AMP + diphosphate. In terms of biological role, aspartyl-tRNA synthetase with relaxed tRNA specificity since it is able to aspartylate not only its cognate tRNA(Asp) but also tRNA(Asn). Reaction proceeds in two steps: L-aspartate is first activated by ATP to form Asp-AMP and then transferred to the acceptor end of tRNA(Asp/Asn). The protein is Aspartate--tRNA(Asp/Asn) ligase of Bacillus cereus (strain G9842).